Here is a 221-residue protein sequence, read N- to C-terminus: Interleukin-12 subunit alpha (221 aa).

Positions 1–25 (MCPLRSLLLISTLVLLHHLPHLSLG) are cleaved as a signal peptide. 3 disulfide bridges follow: Cys39–Cys112, Cys66–Cys198, and Cys87–Cys125. A glycan (N-linked (GlcNAc...) asparagine) is linked at Asn95.

The protein belongs to the IL-6 superfamily. In terms of assembly, heterodimer with IL12B; disulfide-linked. This heterodimer is known as interleukin IL-12. Heterodimer with EBI3/IL27B; not disulfide-linked. This heterodimer is known as interleukin IL-35. Interacts with NBR1; this interaction promotes IL-12 secretion.

Its subcellular location is the secreted. Its function is as follows. Heterodimerizes with IL12B to form the IL-12 cytokine or with EBI3/IL27B to form the IL-35 cytokine. IL-12 is primarily produced by professional antigen-presenting cells (APCs) such as B-cells and dendritic cells (DCs) as well as macrophages and granulocytes and regulates T-cell and natural killer-cell responses, induces the production of interferon-gamma (IFN-gamma), favors the differentiation of T-helper 1 (Th1) cells and is an important link between innate resistance and adaptive immunity. Mechanistically, exerts its biological effects through a receptor composed of IL12R1 and IL12R2 subunits. Binding to the receptor results in the rapid tyrosine phosphorylation of a number of cellular substrates including the JAK family kinases TYK2 and JAK2. In turn, recruited STAT4 gets phosphorylated and translocates to the nucleus where it regulates cytokine/growth factor responsive genes. As part of IL-35, plays essential roles in maintaining the immune homeostasis of the liver microenvironment and also functions as an immune-suppressive cytokine. Mediates biological events through unconventional receptors composed of IL12RB2 and gp130/IL6ST heterodimers or homodimers. Signaling requires the transcription factors STAT1 and STAT4, which form a unique heterodimer that binds to distinct DNA sites. The protein is Interleukin-12 subunit alpha (IL12A) of Bubalus carabanensis (Swamp type water buffalo).